The chain runs to 361 residues: Phospho-N-acetylmuramoyl-pentapeptide-transferase (361 aa).

10 helical membrane-spanning segments follow: residues 28–48, 74–94, 99–119, 133–153, 168–188, 203–223, 236–256, 263–283, 288–308, and 338–358; these read LAII…IEFL, TMGG…LADL, IWIT…DDYA, SKLL…EYLD, LSLD…VGSS, VPIA…GNLI, TGEL…FLWF, VFMG…ISVI, IVLA…ILQV, and KVVI…LSSL.

Belongs to the glycosyltransferase 4 family. MraY subfamily. Requires Mg(2+) as cofactor.

The protein localises to the cell membrane. It catalyses the reaction UDP-N-acetyl-alpha-D-muramoyl-L-alanyl-gamma-D-glutamyl-meso-2,6-diaminopimeloyl-D-alanyl-D-alanine + di-trans,octa-cis-undecaprenyl phosphate = di-trans,octa-cis-undecaprenyl diphospho-N-acetyl-alpha-D-muramoyl-L-alanyl-D-glutamyl-meso-2,6-diaminopimeloyl-D-alanyl-D-alanine + UMP. Its pathway is cell wall biogenesis; peptidoglycan biosynthesis. Functionally, catalyzes the initial step of the lipid cycle reactions in the biosynthesis of the cell wall peptidoglycan: transfers peptidoglycan precursor phospho-MurNAc-pentapeptide from UDP-MurNAc-pentapeptide onto the lipid carrier undecaprenyl phosphate, yielding undecaprenyl-pyrophosphoryl-MurNAc-pentapeptide, known as lipid I. The chain is Phospho-N-acetylmuramoyl-pentapeptide-transferase from Rickettsia rickettsii.